The primary structure comprises 404 residues: Serine/threonine transporter SstT (404 aa).

The next 9 membrane-spanning stretches (helical) occupy residues 17-37, 44-64, 75-95, 138-158, 179-199, 212-232, 287-307, 319-339, and 354-374; these read IGIGVVIGLLLGILLPDVTAI, FVGALKAIAPLLVFALVVQAI, MTLIIVLYLLGTFLAALVAVI, ALATANYIGVLAWALIFGLAL, IVVWIINVAPIGIMGLVFSTV, LLILVLVGTMLFVALVVNPLL, IPLGAMINMGGAAITINVLTL, FLTALLLSVVAAISACGASGV, and FGISSDLAMQVVGVGFIVGVI.

The protein belongs to the dicarboxylate/amino acid:cation symporter (DAACS) (TC 2.A.23) family.

The protein resides in the cell membrane. The enzyme catalyses L-serine(in) + Na(+)(in) = L-serine(out) + Na(+)(out). It catalyses the reaction L-threonine(in) + Na(+)(in) = L-threonine(out) + Na(+)(out). In terms of biological role, involved in the import of serine and threonine into the cell, with the concomitant import of sodium (symport system). The protein is Serine/threonine transporter SstT of Streptococcus equi subsp. zooepidemicus (strain H70).